A 224-amino-acid chain; its full sequence is Retinoschisin (224 aa).

Residues 1 to 23 (MSRKIEGFLLLLLFGYEATLGLS) form the signal peptide. Residues 63 to 219 (CPYHKPLGFE…IAIRMELLEC (157 aa)) enclose the F5/8 type C domain. Intrachain disulfides connect Cys-63/Cys-219 and Cys-110/Cys-142.

As to quaternary structure, homooctamer of 4 homodimers; disulfide-linked. The homooctamer has a flat, cogwheel structure with a diameter of about 14 nm. Two stacked octamers can assemble to form a hexadecamer. In terms of tissue distribution, restricted to the retina (at protein level). Detected in the inner segment of the photoreceptors, the inner nuclear layer, the inner plexiform layer and the ganglion cell layer (at protein level). At the macula, expressed in both the outer and inner nuclear layers and in the inner plexiform layer (at protein level). Detected in retina. Detected only within the photoreceptor cell layer, most prominently within the inner segments of the photoreceptors. Undetectable in the inner plexiform layers and the inner nuclear layer.

It localises to the secreted. It is found in the cell membrane. Functionally, binds negatively charged membrane lipids, such as phosphatidylserine and phosphoinositides. May play a role in cell-cell adhesion processes in the retina, via homomeric interaction between octamers present on the surface of two neighboring cells. Required for normal structure and function of the retina. In Homo sapiens (Human), this protein is Retinoschisin (RS1).